A 384-amino-acid polypeptide reads, in one-letter code: Transcriptional regulator of the unfolded protein response hacA (384 aa).

Over residues 1–18 (MTESTFAVETFSMDSMSP) the composition is skewed to polar residues. Disordered stretches follow at residues 1 to 27 (MTES…IPRL) and 41 to 94 (LVPE…QRRI). The segment covering 84–94 (KTEDEKEQRRI) has biased composition (basic and acidic residues). The bZIP domain occupies 90 to 153 (EQRRIERVLR…NRLSQQVAKL (64 aa)). The interval 92–101 (RRIERVLRNR) is basic motif. The tract at residues 106–113 (ISRERKRL) is leucine-zipper. 2 disordered regions span residues 208 to 256 (SIPF…PSDL) and 331 to 384 (PDED…AGAQ). Positions 218–240 (STTTTTTTTTTTSNNISSTSSTT) are enriched in low complexity.

It belongs to the bZIP family.

The protein localises to the nucleus. Master transcriptional regulator of the unfolded protein response (UPR) that recognizes and binds to the UPR element (UPRE) in the promoter of UPR-regulated genes. Exposure to antifungals and ER-stressing agents initiates the activation of hacA which occurs when a 20 nucleotide fragment is removed from part of the exon-2 and part of intron-2, which in turn promotes the arisen of the DNA binding site motif and a dimer interface domain. Modulates the expression of genes related to cell wall synthesis, ergosterol biosynthesis, pigmentation, heat shock proteins, and the genes coding for mannosyltransferase enzymes. Plays a key role in both response to stress and host-pathogen interaction. The protein is Transcriptional regulator of the unfolded protein response hacA of Trichophyton rubrum (strain ATCC MYA-4607 / CBS 118892) (Athlete's foot fungus).